The sequence spans 419 residues: G protein-activated inward rectifier potassium channel 4 (419 aa).

Over 1–86 the chain is Cytoplasmic; that stretch reads MAGDSRNAMN…LFTTLVDLKW (86 aa). The residue at position 5 (Ser-5) is a Phosphoserine. A helical transmembrane segment spans residues 87-111; sequence RFNLLVFTMVYTVTWLFFGFIWWLI. Topologically, residues 112–135 are extracellular; the sequence is AYIRGDLDHVGDQEWIPCVENLSG. Residues 136–147 constitute an intramembrane region (helical; Pore-forming); sequence FVSAFLFSIETE. Residues 148–154 constitute an intramembrane region (pore-forming); sequence TTIGYGF. A Selectivity filter motif is present at residues 149–154; sequence TIGYGF. The Extracellular portion of the chain corresponds to 155–163; sequence RVITEKCPE. Residues 164 to 185 form a helical membrane-spanning segment; that stretch reads GIILLLVQAILGSIVNAFMVGC. Residues 186–419 are Cytoplasmic-facing; sequence MFVKISQPKK…GGSREARGSV (234 aa). A disordered region spans residues 390–419; it reads AEAGLDAEAEQNEEDEPKGLGGSREARGSV. Residues 394–405 show a composition bias toward acidic residues; that stretch reads LDAEAEQNEEDE.

It belongs to the inward rectifier-type potassium channel (TC 1.A.2.1) family. KCNJ5 subfamily. Associates with KCNJ3/GIRK1 to form a G-protein-activated heteromultimer pore-forming unit. The resulting inward current is much larger. Associates with KCNJ6/GIRK2 to form a G-protein-activated heteromultimer pore-forming unit. In terms of tissue distribution, islets, exocrine pancreas and heart. Expressed in the adrenal cortex, particularly the zona glomerulosa.

The protein resides in the membrane. It carries out the reaction K(+)(in) = K(+)(out). Its activity is regulated as follows. Heteromultimer composed of KCNJ3/GIRK1 and KCNJ5/GIRK4 is activated by phosphatidylinositol 4,5 biphosphate (PtdIns(4,5)P2). Functionally, inward rectifier potassium channels are characterized by a greater tendency to allow potassium to flow into the cell rather than out of it. Their voltage dependence is regulated by the concentration of extracellular potassium; as external potassium is raised, the voltage range of the channel opening shifts to more positive voltages. The inward rectification is mainly due to the blockage of outward current by internal magnesium. Can be blocked by external barium. This potassium channel is controlled by G proteins. This is G protein-activated inward rectifier potassium channel 4 (KCNJ5) from Homo sapiens (Human).